The primary structure comprises 122 residues: Phospholipase A2 homolog ECS_00014 (122 aa).

Intrachain disulfides connect Cys-26–Cys-115, Cys-28–Cys-44, Cys-43–Cys-95, Cys-49–Cys-122, Cys-50–Cys-88, Cys-57–Cys-81, and Cys-75–Cys-86. Residues 105 to 117 form an important for membrane-damaging activities in eukaryotes and bacteria; heparin-binding region; it reads KKYTYYPNFWCKG.

This sequence belongs to the phospholipase A2 family. Group II subfamily. S49 sub-subfamily. Monomer. Expressed by the venom gland.

The protein localises to the secreted. Functionally, snake venom phospholipase A2 homolog that lacks enzymatic activity. Shows high myotoxin activities and displays edema-inducing activities. Has cytotoxic activities against HUVEC cells (LC(50)=12.2 uL) and human lung adenocarcinoma A549 cells (LC(50)=8.5 uL). This is Phospholipase A2 homolog ECS_00014 from Echis carinatus sochureki (Saw-scaled viper).